The chain runs to 226 residues: Ribonuclease 3 (226 aa).

One can recognise an RNase III domain in the interval 7–129; it reads LPRLCRTLGY…IIGAIYLDSD (123 aa). Glu42 is a binding site for Mg(2+). Residue Asp46 is part of the active site. Positions 115 and 118 each coordinate Mg(2+). Glu118 is an active-site residue. The 71-residue stretch at 156–226 folds into the DRBM domain; the sequence is DAKTLLQEYL…AAQVLELLKK (71 aa).

The protein belongs to the ribonuclease III family. In terms of assembly, homodimer. The cofactor is Mg(2+).

It is found in the cytoplasm. It catalyses the reaction Endonucleolytic cleavage to 5'-phosphomonoester.. Its function is as follows. Digests double-stranded RNA. Involved in the processing of primary rRNA transcript to yield the immediate precursors to the large and small rRNAs (23S and 16S). Processes some mRNAs, and tRNAs when they are encoded in the rRNA operon. Processes pre-crRNA and tracrRNA of type II CRISPR loci if present in the organism. This is Ribonuclease 3 from Shewanella sp. (strain W3-18-1).